Here is a 429-residue protein sequence, read N- to C-terminus: MKIQVETVSPVERKVTIEVDPDRVAKELDRAYASLSRRVKLRGFRPGKAPRKVLERQFKAEVEGEVAERIVTETFTEAVRVESLPVVAPPSVSITDGVAEGKPMRYSARVEVKPKLEPKDYKGLEVTRKPPEVTDESVSAELTKIQDSMAQLVAVEGRFEAQEGDWAVIDHEGTIDGKPFDGSTAEGVTVKVAPGPITEGNVEALKGKKIGDTVELDEPFPADHRDEALRGKTAHMKVTLKALKVRQAPALDDALAKELGIEGVETLDALRTRIRSDLEKREKRRAESELKDALVKAALAKNEFEVPPALVERAIDTMIEGAAERFARQGIDLRQLQLDVSRMRADLREQALLQVRGALLLEAIADAEKVEVTEEDLEAEAARIADELGMPLAKVQQQTRGKDAREALKNRIREEKALSLLSSAATIQQ.

The region spanning 164-249 (GDWAVIDHEG…LKALKVRQAP (86 aa)) is the PPIase FKBP-type domain.

Belongs to the FKBP-type PPIase family. Tig subfamily.

The protein resides in the cytoplasm. The catalysed reaction is [protein]-peptidylproline (omega=180) = [protein]-peptidylproline (omega=0). Functionally, involved in protein export. Acts as a chaperone by maintaining the newly synthesized protein in an open conformation. Functions as a peptidyl-prolyl cis-trans isomerase. This is Trigger factor from Anaeromyxobacter dehalogenans (strain 2CP-C).